The following is a 132-amino-acid chain: MQTTFTELMQQLFLKLGLNHQVNENDVYTFTFEVDGHIQVLIACYHQQWVQLFSELGADLPTNDNLFGEHWPAHVQGRLDGKPILWSQQSLVGLDIDEMQAWLERFIDDIEQRKEPQNTKFQPNSTSPILFI.

Binds to YopT.

In terms of biological role, functions as a specific chaperone for YopT. This chain is Chaperone protein SycT (sycT), found in Yersinia pestis.